The sequence spans 982 residues: MAPPMNLQQWLLWKKMNETHLALENISSLTEEQKQQVIIEIQQEEVIPTRMDRVKYLAYACCATSTRVMCWLFLICVLLIIVFVSCFVTVARIQWNRDINVFGPVIDWNVTHQATYQQLKAARLTRSLKVEHPHISYISINMSSIPQGVMYTPHPEPIILKERVLGISQVLMINSENIANVANLSQETKVLLTDMINEELQDLSNQMIDFELPLGDPRDQDQYIHHKCYQEFAHCYLVKYKKPSPWISEGIIVDQCPLPRIHDPNYYKYQPIWDYYLKIQNIRPQGWTSKSYYGTARMGSFYIPTFLRNNTVSHVLFCSDQLYGKWYNIENNIQENEQLLKTKLYNLTTYSKLKARALPKEWNNQGNARLFRSFNPLDVCNRPEAVLLLNTTYFTYSLWEGDCNYTTALIQNLTECRQPDRLKLKHPYACRFWRYKEGQEEVKCLGNEKKKCLYYSEYSSPEAQFDFGFLSYLNAFPGLKYIENQTVREPEYEVYSLYMECMNSAEKYGIDSVLFALKTFLNFTGTPVNEMSTARAFVGLTDPKFPPTYPNITKEQKRCNNLKRRKRSTNIEKLRSMGYSLTGAVQTLSQISDINDERLQQGVSLLRDHVVTLMEAALHDITIMEGMLAIQHVHTHLNHLKTILLMRKIDWTFIKSNWIKEQLQKTEDEMKIIRRTAKSLVYYVTQTSSSTTATSWEIGIYYEITIPKHIYLNNWQVINIGHLVESAGHLTLIRVKHPYEVINKECTYEQYLHLEDCISQDYVICDTVQIVSPCGNSTTTSDCPVTAEKVKEPYVQVSALKNGSYLVLTSRTDCSIPAYVPSIVTVNETVKCFGVEFHKPLYSESKVSFEPQVPHLKLRLPHLVGIIANLQNLEIEVTSTQESIKDQIERAKSQLLRLDIHEGDFPAWIQQLASATRDVWPAAARALQGIGNVLSNTAQGIFGTTVSILSYAKPILIGIGVILLIAFLFKIVSWLPGKKKRN.

Positions 1–15 are involved in virion budding; that stretch reads MAPPMNLQQWLLWKK. At 1–65 the chain is on the cytoplasmic side; sequence MAPPMNLQQW…YLAYACCATS (65 aa). Glycyl lysine isopeptide (Lys-Gly) (interchain with G-Cter in ubiquitin) cross-links involve residues lysine 14, lysine 15, and lysine 34. The helical; Signal-anchor for type III membrane protein transmembrane segment at 66–88 threads the bilayer; the sequence is TRVMCWLFLICVLLIIVFVSCFV. Topologically, residues 89–954 are lumenal; that stretch reads TVARIQWNRD…TVSILSYAKP (866 aa). Asparagine 109, asparagine 141, asparagine 183, asparagine 309, asparagine 346, asparagine 390, asparagine 404, asparagine 412, asparagine 484, asparagine 522, and asparagine 551 each carry an N-linked (GlcNAc...) asparagine; by host glycan. Residues 570–592 are fusion peptide; it reads NIEKLRSMGYSLTGAVQTLSQIS. N-linked (GlcNAc...) asparagine; by host glycosylation is found at asparagine 776, asparagine 802, and asparagine 827. Residues 955–975 traverse the membrane as a helical segment; sequence ILIGIGVILLIAFLFKIVSWL. The Cytoplasmic segment spans residues 976–982; the sequence is PGKKKRN. Positions 978–980 match the Endoplasmic reticulum retention signal motif; sequence KKK.

As to quaternary structure, the mature envelope protein consists of a trimer of SU-TM heterodimers. The N-terminus of leader peptide specifically interacts with Gag protein. This specific interaction between Gag protein and Env glycoprotein may allow particle egress. In terms of processing, envelope glycoproteins are synthesized as an inactive precursor that is processed by host furin or a furin-like protease to yield a functional hetero-oligomeric complex. Post-translationally, the transmembrane protein and the surface protein are N-glycosylated. Mono- and polyubiquitinated leader peptide are found in viral particles. Ubiquitination may be involved in regulating the balance between viral and subviral particles release.

It is found in the host endoplasmic reticulum membrane. It localises to the virion membrane. Its function is as follows. The surface protein (SU) attaches the virus to the host cell by binding to the cell receptor. This interaction triggers the refolding of TM and is thought to activate its fusogenic potential by unmasking its fusion peptide. In terms of biological role, the transmembrane protein (TM) acts as a class I viral fusion protein. Under the current model, the protein has at least 3 conformational states: pre-fusion native state, pre-hairpin intermediate state, and post-fusion hairpin state. During viral and target cell membrane fusion, the coiled coil regions (heptad repeats) assume a trimer-of-hairpins structure, positioning the fusion peptide in close proximity to the C-terminal region of the ectodomain. The formation of this structure appears to drive apposition and subsequent fusion of viral and target cell membranes. Membranes fusion leads to delivery of the nucleocapsid into the cytoplasm. Functionally, the leader peptide is a component of released, infectious virions and is required for particle budding. This is Envelope glycoprotein gp130 (env) from Simian foamy virus type 3 (strain LK3) (SFVagm).